Consider the following 435-residue polypeptide: Angio-associated migratory cell protein (435 aa).

The disordered stretch occupies residues 1–65; it reads MESESESGAA…EEEEEGNEEG (65 aa). Ser20 is subject to Phosphoserine. A compositionally biased stretch (acidic residues) spans 39–63; it reads DPDDLAQEMEDVDFEEEEEEEEGNE. 8 WD repeats span residues 90–130, 133–172, 174–213, 215–255, 259–300, 316–355, 357–396, and 399–434; these read LHSA…LLFE, GHKD…EVWS, EAGD…KTFQ, PNCP…HVLK, GHQG…GVFR, SESN…LRHQ, QHQS…LLTD, and GHTA…QRPD.

The protein resides in the cell membrane. The protein localises to the cytoplasm. Functionally, plays a role in angiogenesis and cell migration. In smooth muscle cell migration, may act through the RhoA pathway. The protein is Angio-associated migratory cell protein (AAMP) of Canis lupus familiaris (Dog).